We begin with the raw amino-acid sequence, 544 residues long: Esterase-6 (544 aa).

Positions 1–21 (MNYVGLGLIIVLSCLWLGSNA) are cleaved as a signal peptide. Asparagine 42 carries an N-linked (GlcNAc...) asparagine glycan. Cysteines 86 and 105 form a disulfide. Serine 209 acts as the Acyl-ester intermediate in catalysis. Residues cysteine 261 and cysteine 273 are joined by a disulfide bond. N-linked (GlcNAc...) asparagine glycosylation is found at asparagine 420 and asparagine 456. Histidine 466 functions as the Charge relay system in the catalytic mechanism. The N-linked (GlcNAc...) asparagine glycan is linked to asparagine 506. Cysteine 514 and cysteine 535 are joined by a disulfide.

This sequence belongs to the type-B carboxylesterase/lipase family. As to quaternary structure, monomer. In terms of tissue distribution, specifically expressed in the ejaculatory bulbs of male.

The protein resides in the secreted. It catalyses the reaction a carboxylic ester + H2O = an alcohol + a carboxylate + H(+). Transferred from the ejaculatory bulbs of males to the female genitals upon copulation, plays an important role in the reproductive biology. In Drosophila melanogaster (Fruit fly), this protein is Esterase-6 (Est-6).